A 100-amino-acid polypeptide reads, in one-letter code: uncharacterized protein (100 aa).

This is an uncharacterized protein from Acidianus filamentous virus 2 (isolate Italy/Pozzuoli) (AFV-2).